The chain runs to 418 residues: Glutamyl-tRNA reductase (418 aa).

Substrate is bound by residues 49–52, serine 109, 114–116, and glutamine 120; these read TCNR and EPQ. The active-site Nucleophile is cysteine 50. Position 189 to 194 (189 to 194) interacts with NADP(+); sequence GAGETI.

The protein belongs to the glutamyl-tRNA reductase family. As to quaternary structure, homodimer.

The catalysed reaction is (S)-4-amino-5-oxopentanoate + tRNA(Glu) + NADP(+) = L-glutamyl-tRNA(Glu) + NADPH + H(+). The protein operates within porphyrin-containing compound metabolism; protoporphyrin-IX biosynthesis; 5-aminolevulinate from L-glutamyl-tRNA(Glu): step 1/2. In terms of biological role, catalyzes the NADPH-dependent reduction of glutamyl-tRNA(Glu) to glutamate 1-semialdehyde (GSA). The protein is Glutamyl-tRNA reductase of Escherichia coli O9:H4 (strain HS).